We begin with the raw amino-acid sequence, 277 residues long: Ribosomal RNA small subunit methyltransferase G (277 aa).

S-adenosyl-L-methionine-binding positions include Gly-128, Phe-133, 188 to 189 (SE), and Arg-198.

The protein belongs to the methyltransferase superfamily. RNA methyltransferase RsmG family.

The protein resides in the cytoplasm. The catalysed reaction is guanosine(527) in 16S rRNA + S-adenosyl-L-methionine = N(7)-methylguanosine(527) in 16S rRNA + S-adenosyl-L-homocysteine. Specifically methylates the N7 position of guanine in position 527 of 16S rRNA. This chain is Ribosomal RNA small subunit methyltransferase G, found in Nitrobacter winogradskyi (strain ATCC 25391 / DSM 10237 / CIP 104748 / NCIMB 11846 / Nb-255).